Reading from the N-terminus, the 647-residue chain is MGKIRKLDDQLSNLIAAGEVVERPASVVKELVENSIDANSTSIEIHLEEAGLSKIRIIDNGDGIAEEDCIVAFERHATSKIKDENDLFRIRTLGFRGEALPSIASVSELELITSTGDAPGTHLIIKGGDIIKQEKTASRKGTDITVQNLFFNTPARLKYMKTIHTELGNITDIVYRIAMSHPEVSLKLFHNEKKLLHTSGNGDVRQVLASIYSIQVAKKLVPIEAESLDFTIKGYVTLPEVTRASRNYMSTIVNGRYVRNFVLMKAIQQGYHTLLPVGRYPIGFLSIEMDPMLVDVNVHPAKLEVRFSKEQELLKLIEETLQAAFKKIQLIPDAGVTTKKKEKDESVQEQFQFEHAKPKEPSMPDIILPTGMDEKQEEPLAVKQPAQLWQPPKQEWQPPQSLVREEQSWQPSTKPIMEEPIREEKSWDSNEEDFELEELEEEVQEIEEIEMNGNDLPPLYPIGQMHGTYIFAQNDKGLYMIDQHAAQERINYEYFRDKVGRVAQEVQELLVPYRIDLSLTEFLRVEEQLEELKKVGLFLEQFGHQSFIVRSHPTWFPKGQETEIIDEMMEQVVKLKKVDIKKLREEAAIMMSCKASIKANQYLTNDQIFALLEELRTTTNPYTCPHGRPILVHHSTYELEKMFKRVM.

Belongs to the DNA mismatch repair MutL/HexB family.

In terms of biological role, this protein is involved in the repair of mismatches in DNA. It is required for dam-dependent methyl-directed DNA mismatch repair. May act as a 'molecular matchmaker', a protein that promotes the formation of a stable complex between two or more DNA-binding proteins in an ATP-dependent manner without itself being part of a final effector complex. The polypeptide is DNA mismatch repair protein MutL (Bacillus cereus (strain 03BB102)).